We begin with the raw amino-acid sequence, 255 residues long: tRNA pseudouridine synthase A (255 aa).

Asp-43 (nucleophile) is an active-site residue. Tyr-94 contributes to the substrate binding site.

Belongs to the tRNA pseudouridine synthase TruA family.

It catalyses the reaction uridine(38/39/40) in tRNA = pseudouridine(38/39/40) in tRNA. Its function is as follows. Formation of pseudouridine at positions 38, 39 and 40 in the anticodon stem and loop of transfer RNAs. This is tRNA pseudouridine synthase A from Pyrobaculum neutrophilum (strain DSM 2338 / JCM 9278 / NBRC 100436 / V24Sta) (Thermoproteus neutrophilus).